Consider the following 476-residue polypeptide: Cysteine--tRNA ligase (476 aa).

C29 contacts Zn(2+). The short motif at P31–H41 is the 'HIGH' region element. Positions 209, 234, and 238 each coordinate Zn(2+). A 'KMSKS' region motif is present at residues K266–S270. Position 269 (K269) interacts with ATP.

Belongs to the class-I aminoacyl-tRNA synthetase family. Zn(2+) serves as cofactor.

Its subcellular location is the cytoplasm. It catalyses the reaction tRNA(Cys) + L-cysteine + ATP = L-cysteinyl-tRNA(Cys) + AMP + diphosphate. The sequence is that of Cysteine--tRNA ligase (cysS) from Pyrococcus horikoshii (strain ATCC 700860 / DSM 12428 / JCM 9974 / NBRC 100139 / OT-3).